The chain runs to 200 residues: Ras-related protein Rab5 (200 aa).

GTP is bound by residues Gly-17–Ser-25, Leu-36–Thr-42, Asp-65–Gln-69, Asn-123–Asp-126, and Ser-153–Lys-155. The Effector region motif lies at Gln-39–Phe-47. S-geranylgeranyl cysteine attachment occurs at residues Cys-198 and Cys-199.

This sequence belongs to the small GTPase superfamily. Rab family. Virtually not expressed in leaves, higher in stems and roots, and highest in flowers.

Its subcellular location is the cell membrane. Protein transport. Probably involved in vesicular traffic. This is Ras-related protein Rab5 (RAB5) from Nicotiana tabacum (Common tobacco).